A 157-amino-acid chain; its full sequence is Small ribosomal subunit protein uS7 (157 aa).

The protein belongs to the universal ribosomal protein uS7 family. In terms of assembly, part of the 30S ribosomal subunit. Contacts proteins S9 and S11.

One of the primary rRNA binding proteins, it binds directly to 16S rRNA where it nucleates assembly of the head domain of the 30S subunit. Is located at the subunit interface close to the decoding center, probably blocks exit of the E-site tRNA. This Chlamydia trachomatis serovar A (strain ATCC VR-571B / DSM 19440 / HAR-13) protein is Small ribosomal subunit protein uS7.